Here is an 873-residue protein sequence, read N- to C-terminus: Protein SEY1 (873 aa).

The Cytoplasmic portion of the chain corresponds to 1 to 750 (MVANGHFFAG…KRSAIGGITQ (750 aa)). The region spanning 50–308 (GFNYHLISVF…IPADGFAVYA (259 aa)) is the GB1/RHD3-type G domain. 60 to 67 (GSQSTGKS) provides a ligand contact to GTP. Positions 677-701 (LDKWIGHTPSSATPADEEDLTPIGG) are disordered. A compositionally biased stretch (acidic residues) spans 691–701 (ADEEDLTPIGG). A helical transmembrane segment spans residues 751 to 771 (VPLYFYGLLLALGWNEIVAVL). Topologically, residues 772 to 774 (RNP) are lumenal. Residues 775–795 (AYFLLLFVCAVTAYVTYQLNL) form a helical membrane-spanning segment. Residues 796–873 (WGPIIKMTEA…IDDADDDDDF (78 aa)) lie on the Cytoplasmic side of the membrane. The tract at residues 841 to 873 (EGYDMSNMKNRKSAGGYQNNRSHIDDADDDDDF) is disordered.

This sequence belongs to the TRAFAC class dynamin-like GTPase superfamily. GB1/RHD3 GTPase family. RHD3 subfamily.

The protein localises to the endoplasmic reticulum membrane. Cooperates with the reticulon proteins and tubule-shaping DP1 family proteins to generate and maintain the structure of the tubular endoplasmic reticulum network. Has GTPase activity, which is required for its function in ER organization. In Paracoccidioides lutzii (strain ATCC MYA-826 / Pb01) (Paracoccidioides brasiliensis), this protein is Protein SEY1.